The chain runs to 347 residues: 2-hydroxyacid dehydrogenase A (347 aa).

NAD(+) is bound by residues 157 to 158, Asp-177, 234 to 236, and Asp-260; these read RI and TSR. The active site involves Arg-236. Glu-265 is a catalytic residue.

Belongs to the D-isomer specific 2-hydroxyacid dehydrogenase family.

It carries out the reaction a (2R)-2-hydroxycarboxylate + NADP(+) = a 2-oxocarboxylate + NADPH + H(+). In terms of biological role, 2-hydroxyacid dehydrogenase that is capable to reduce pyruvate, hydroxypyruvate and glyoxylate in a NADPH- or NADH-dependent manner. In contrast to 2-HadhD/morA, does not recognize 4-methyl-2-oxopentanoate (MOA) as a substrate. This is 2-hydroxyacid dehydrogenase A from Aspergillus oryzae (strain ATCC 42149 / RIB 40) (Yellow koji mold).